A 277-amino-acid polypeptide reads, in one-letter code: Caspase-6 (277 aa).

The propeptide occupies 1–5 (MTETD). The segment at 25–27 (KRR) is tri-arginine exosite. Ser62 is modified (phosphoserine). His104 is a catalytic residue. Residues 108 to 125 (NHIYAYDAKIEIQTLTGL) are 130's region. The active site involves Cys146. Residues 163–176 (HQTDKLDDNVTQVD) constitute a propeptide that is removed on maturation. Ser240 bears the Phosphoserine mark. 2 S-palmitoyl cysteine lipidation sites follow: Cys247 and Cys260.

The protein belongs to the peptidase C14A family. In terms of assembly, heterotetramer that consists of two anti-parallel arranged heterodimers, each one formed by a 18 kDa (p18) and a 11 kDa (p11) subunits. Interacts with BIRC6/bruce. Interacts with RIPK3. Heterotetramer that consists of two anti-parallel arranged heterodimers, each one formed by a 18 kDa (Caspase-6 subunit p18) and a 11 kDa (Caspase-6 subunit p11) subunit. Phosphorylated by NUAK1; phosphorylation inhibits self-activation. Phosphorylation at Ser-240 by AMP-activated protein kinase (PRKAA1 or PRKAA2) inhibits autocleavage, preventing caspase activation, thereby preventing hepatocyte apoptosis. Post-translationally, palmitoylation by ZDHHC17 blocks dimerization and subsequent activation, leading to inhibit the cysteine protease activity. In terms of processing, can be cleaved and activated by different caspases, depending on the context. Cleaved and activated by caspase-8 (CASP8) and subsequently by caspase-3 (CASP3). Can also undergo autoactivation by mediating autocleavage at Asp-162 and Asp-176, while it is not able to cleave its N-terminal disordered prodomain. Cleaved and activated by CASP1, possibly in the context of inflammation.

Its subcellular location is the cytoplasm. It is found in the nucleus. The catalysed reaction is Strict requirement for Asp at position P1 and has a preferred cleavage sequence of Val-Glu-His-Asp-|-.. With respect to regulation, during activation, the N-terminal disordered prodomain is removed by cleavage. Concomitantly, double cleavage gives rise to a large 18-kDa and a small 11-kDa subunit. The two large and two small subunits then assemble to form the active CASP6 complex. Can be cleaved and activated by different caspases, depending on the context. Cleaved and activated by caspase-8 (CASP8) and subsequently by caspase-3 (CASP3). Can also undergo autoactivation by mediating autocleavage at Asp-162 and Asp-176, while it is not able to cleave its N-terminal disordered prodomain. Intramolecular cleavage at Asp-176 is a prerequisite for CASP6 self-activation. Cleaved and activated by CASP1 in neurons, possibly in the context of inflammation. Phosphorylation at Ser-240 inhibits autocleavage, preventing caspase activation. In terms of biological role, cysteine protease that plays essential roles in programmed cell death, axonal degeneration, development and innate immunity. Acts as a non-canonical executioner caspase during apoptosis: localizes in the nucleus and cleaves the nuclear structural protein NUMA1 and lamin A/LMNA thereby inducing nuclear shrinkage and fragmentation. Lamin-A/LMNA cleavage is required for chromatin condensation and nuclear disassembly during apoptotic execution. Acts as a regulator of liver damage by promoting hepatocyte apoptosis: in absence of phosphorylation by AMP-activated protein kinase (AMPK), catalyzes cleavage of BID, leading to cytochrome c release, thereby participating in nonalcoholic steatohepatitis. Cleaves PARK7/DJ-1 in cells undergoing apoptosis. Involved in intrinsic apoptosis by mediating cleavage of RIPK1. Furthermore, cleaves many transcription factors such as NF-kappa-B and cAMP response element-binding protein/CREBBP. Cleaves phospholipid scramblase proteins XKR4 and XKR9. In addition to apoptosis, involved in different forms of programmed cell death. Plays an essential role in defense against viruses by acting as a central mediator of the ZBP1-mediated pyroptosis, apoptosis, and necroptosis (PANoptosis), independently of its cysteine protease activity. PANoptosis is a unique inflammatory programmed cell death, which provides a molecular scaffold that allows the interactions and activation of machinery required for inflammasome/pyroptosis, apoptosis and necroptosis. Mechanistically, interacts with RIPK3 and enhances the interaction between RIPK3 and ZBP1, leading to ZBP1-mediated inflammasome activation and cell death. Plays an essential role in axon degeneration during axon pruning which is the remodeling of axons during neurogenesis but not apoptosis. Regulates B-cell programs both during early development and after antigen stimulation. The sequence is that of Caspase-6 from Rattus norvegicus (Rat).